Here is a 265-residue protein sequence, read N- to C-terminus: Thymidine kinase 2, mitochondrial (265 aa).

The N-terminal 33 residues, 1 to 33 (MLLRPLRGWAALALRCFEPGSPGSPASGPGSRR), are a transit peptide targeting the mitochondrion. Low complexity predominate over residues 21-31 (SPGSPASGPGS). The segment at 21-45 (SPGSPASGPGSRRVQRGAWPSDKER) is disordered. 57–65 (GNIASGKTT) is an ATP binding site. Glu133 acts as the Proton acceptor in catalysis.

It belongs to the DCK/DGK family. As to quaternary structure, homodimer.

It is found in the mitochondrion. It catalyses the reaction thymidine + ATP = dTMP + ADP + H(+). The enzyme catalyses 2'-deoxycytidine + ATP = dCMP + ADP + H(+). It carries out the reaction 2'-deoxyuridine + ATP = dUMP + ADP + H(+). In terms of biological role, phosphorylates thymidine, deoxycytidine, and deoxyuridine in the mitochondrial matrix. In non-replicating cells, where cytosolic dNTP synthesis is down-regulated, mtDNA synthesis depends solely on TK2 and DGUOK. In Macaca fascicularis (Crab-eating macaque), this protein is Thymidine kinase 2, mitochondrial (TK2).